The sequence spans 765 residues: Phosphoribosylformylglycinamidine synthase subunit PurL (765 aa).

Histidine 41 is a catalytic residue. Residues tyrosine 44 and lysine 83 each coordinate ATP. Residue glutamate 85 participates in Mg(2+) binding. Substrate is bound by residues 86-89 and arginine 108; that span reads SHNH. The active-site Proton acceptor is the histidine 87. Residue aspartate 109 participates in Mg(2+) binding. Glutamine 232 serves as a coordination point for substrate. Aspartate 260 is a Mg(2+) binding site. 304-306 serves as a coordination point for substrate; the sequence is ESQ. ATP contacts are provided by aspartate 503 and glycine 540. Asparagine 541 provides a ligand contact to Mg(2+). Residue serine 543 coordinates substrate.

This sequence belongs to the FGAMS family. Monomer. Part of the FGAM synthase complex composed of 1 PurL, 1 PurQ and 2 PurS subunits.

It localises to the cytoplasm. It catalyses the reaction N(2)-formyl-N(1)-(5-phospho-beta-D-ribosyl)glycinamide + L-glutamine + ATP + H2O = 2-formamido-N(1)-(5-O-phospho-beta-D-ribosyl)acetamidine + L-glutamate + ADP + phosphate + H(+). It participates in purine metabolism; IMP biosynthesis via de novo pathway; 5-amino-1-(5-phospho-D-ribosyl)imidazole from N(2)-formyl-N(1)-(5-phospho-D-ribosyl)glycinamide: step 1/2. Its function is as follows. Part of the phosphoribosylformylglycinamidine synthase complex involved in the purines biosynthetic pathway. Catalyzes the ATP-dependent conversion of formylglycinamide ribonucleotide (FGAR) and glutamine to yield formylglycinamidine ribonucleotide (FGAM) and glutamate. The FGAM synthase complex is composed of three subunits. PurQ produces an ammonia molecule by converting glutamine to glutamate. PurL transfers the ammonia molecule to FGAR to form FGAM in an ATP-dependent manner. PurS interacts with PurQ and PurL and is thought to assist in the transfer of the ammonia molecule from PurQ to PurL. This Synechococcus sp. (strain WH7803) protein is Phosphoribosylformylglycinamidine synthase subunit PurL.